Reading from the N-terminus, the 302-residue chain is Stanniocalcin-2 (302 aa).

Residues methionine 1 to glycine 24 form the signal peptide. The disordered stretch occupies residues arginine 23–arginine 44. An N-linked (GlcNAc...) asparagine glycan is attached at asparagine 73. Positions lysine 217–arginine 302 are disordered. Positions proline 227–serine 264 are enriched in basic and acidic residues. A phosphoserine; by FAM20C mark is found at serine 250 and serine 251. Threonine 254 carries the post-translational modification Phosphothreonine; by FAM20C.

This sequence belongs to the stanniocalcin family. Homodimer; disulfide-linked. Expressed in a variety of tissues including muscle, heart, pancreas, kidney, spleen, prostate, small intestine, colon and peripheral blood leukocytes.

Its subcellular location is the secreted. Functionally, has an anti-hypocalcemic action on calcium and phosphate homeostasis. The protein is Stanniocalcin-2 (STC2) of Homo sapiens (Human).